A 92-amino-acid polypeptide reads, in one-letter code: Integration host factor subunit beta (92 aa).

It belongs to the bacterial histone-like protein family. Heterodimer of an alpha and a beta chain.

This protein is one of the two subunits of integration host factor, a specific DNA-binding protein that functions in genetic recombination as well as in transcriptional and translational control. The chain is Integration host factor subunit beta from Vibrio cholerae serotype O1 (strain ATCC 39541 / Classical Ogawa 395 / O395).